The chain runs to 189 residues: Crossover junction endodeoxyribonuclease RuvC (189 aa).

Catalysis depends on residues Asp7, Glu68, and Asp141. 3 residues coordinate Mg(2+): Asp7, Glu68, and Asp141.

It belongs to the RuvC family. Homodimer which binds Holliday junction (HJ) DNA. The HJ becomes 2-fold symmetrical on binding to RuvC with unstacked arms; it has a different conformation from HJ DNA in complex with RuvA. In the full resolvosome a probable DNA-RuvA(4)-RuvB(12)-RuvC(2) complex forms which resolves the HJ. Mg(2+) is required as a cofactor.

The protein localises to the cytoplasm. The enzyme catalyses Endonucleolytic cleavage at a junction such as a reciprocal single-stranded crossover between two homologous DNA duplexes (Holliday junction).. Its function is as follows. The RuvA-RuvB-RuvC complex processes Holliday junction (HJ) DNA during genetic recombination and DNA repair. Endonuclease that resolves HJ intermediates. Cleaves cruciform DNA by making single-stranded nicks across the HJ at symmetrical positions within the homologous arms, yielding a 5'-phosphate and a 3'-hydroxyl group; requires a central core of homology in the junction. The consensus cleavage sequence is 5'-(A/T)TT(C/G)-3'. Cleavage occurs on the 3'-side of the TT dinucleotide at the point of strand exchange. HJ branch migration catalyzed by RuvA-RuvB allows RuvC to scan DNA until it finds its consensus sequence, where it cleaves and resolves the cruciform DNA. The protein is Crossover junction endodeoxyribonuclease RuvC of Rhodococcus jostii (strain RHA1).